Consider the following 330-residue polypeptide: ATP-dependent (S)-NAD(P)H-hydrate dehydratase (330 aa).

Residues 36–327 (VIPLVRNTIP…QEINSAFKKL (292 aa)) form the YjeF C-terminal domain. Residues G136 and 189–195 (NFMEFTR) each bind (6S)-NADPHX. Residues 229–233 (KGEED) and 248–257 (GSGRRCGGQG) contribute to the ATP site. Residue D258 coordinates (6S)-NADPHX.

Belongs to the NnrD/CARKD family. The cofactor is Mg(2+).

It catalyses the reaction (6S)-NADHX + ATP = ADP + phosphate + NADH + H(+). It carries out the reaction (6S)-NADPHX + ATP = ADP + phosphate + NADPH + H(+). Its function is as follows. Catalyzes the dehydration of the S-form of NAD(P)HX at the expense of ATP, which is converted to ADP. Together with NAD(P)HX epimerase, which catalyzes the epimerization of the S- and R-forms, the enzyme allows the repair of both epimers of NAD(P)HX, a damaged form of NAD(P)H that is a result of enzymatic or heat-dependent hydration. This chain is ATP-dependent (S)-NAD(P)H-hydrate dehydratase, found in Danio rerio (Zebrafish).